We begin with the raw amino-acid sequence, 329 residues long: o-succinylbenzoate synthase (329 aa).

The active-site Proton donor is K140. D168, E197, and D220 together coordinate Mg(2+). K242 functions as the Proton acceptor in the catalytic mechanism.

This sequence belongs to the mandelate racemase/muconate lactonizing enzyme family. MenC type 1 subfamily. Requires a divalent metal cation as cofactor.

The catalysed reaction is (1R,6R)-6-hydroxy-2-succinyl-cyclohexa-2,4-diene-1-carboxylate = 2-succinylbenzoate + H2O. Its pathway is quinol/quinone metabolism; 1,4-dihydroxy-2-naphthoate biosynthesis; 1,4-dihydroxy-2-naphthoate from chorismate: step 4/7. It functions in the pathway quinol/quinone metabolism; menaquinone biosynthesis. Its function is as follows. Converts 2-succinyl-6-hydroxy-2,4-cyclohexadiene-1-carboxylate (SHCHC) to 2-succinylbenzoate (OSB). This chain is o-succinylbenzoate synthase, found in Haemophilus influenzae (strain ATCC 51907 / DSM 11121 / KW20 / Rd).